A 317-amino-acid chain; its full sequence is MTATIDDQEKNQRSNPDHEEYQYLDLIRRIINVGEVRPDRTGTGTVALFAPPSFRFSLADNTLPLLTTKRVFLRGVIAELLWFVSGCTDAKMLSSQGVGIWDGNGSKEFLEKVGLGHRREGDLGPVYGFQWRHFGAEYTDADGDYKGKGVDQLQRVIDTIKNNPTDRRIILSAWNPKDLPLMALPPCHMFCQFFVSLPPADSPGSKPKLSCLMYQRSCDLGLGVPFNIASYALLTHMIALITDTEPHEFILQMGDAHVYRDHVEPLKTQLEREPRDFPKLKWARSKEEIGDIDGFKVEDFVVEGYKPWGKIDMKMSA.

DUMP-binding positions include R40 and 167–168 (RR). C187 serves as the catalytic Nucleophile. Residues 216–219 (RSCD), N227, and 257–259 (HVY) contribute to the dUMP site. D219 contacts (6R)-5,10-methylene-5,6,7,8-tetrahydrofolate.

Belongs to the thymidylate synthase family. As to quaternary structure, homodimer.

The enzyme catalyses dUMP + (6R)-5,10-methylene-5,6,7,8-tetrahydrofolate = 7,8-dihydrofolate + dTMP. Its pathway is pyrimidine metabolism; dTTP biosynthesis. This is Thymidylate synthase (TMP1) from Cryptococcus neoformans var. neoformans serotype D (strain B-3501A) (Filobasidiella neoformans).